Reading from the N-terminus, the 363-residue chain is S-adenosylmethionine:tRNA ribosyltransferase-isomerase (363 aa).

The protein belongs to the QueA family. Monomer.

Its subcellular location is the cytoplasm. It carries out the reaction 7-aminomethyl-7-carbaguanosine(34) in tRNA + S-adenosyl-L-methionine = epoxyqueuosine(34) in tRNA + adenine + L-methionine + 2 H(+). The protein operates within tRNA modification; tRNA-queuosine biosynthesis. Functionally, transfers and isomerizes the ribose moiety from AdoMet to the 7-aminomethyl group of 7-deazaguanine (preQ1-tRNA) to give epoxyqueuosine (oQ-tRNA). This is S-adenosylmethionine:tRNA ribosyltransferase-isomerase from Brucella anthropi (strain ATCC 49188 / DSM 6882 / CCUG 24695 / JCM 21032 / LMG 3331 / NBRC 15819 / NCTC 12168 / Alc 37) (Ochrobactrum anthropi).